Reading from the N-terminus, the 271-residue chain is Insulin-like growth factor-binding protein 5 (271 aa).

Positions 1 to 19 (MVISVVLLLLAACAVPAQG) are cleaved as a signal peptide. Residues 22–102 (SFVHCEPCDE…LHGRGVCLNE (81 aa)) form the IGFBP N-terminal domain. 6 disulfides stabilise this stretch: cysteine 26–cysteine 52, cysteine 29–cysteine 54, cysteine 37–cysteine 55, cysteine 44–cysteine 58, cysteine 66–cysteine 79, and cysteine 73–cysteine 99. The span at 109–121 (TKIERDSREHEEP) shows a compositional bias: basic and acidic residues. The disordered stretch occupies residues 109-129 (TKIERDSREHEEPTTSEMAEE). The residue at position 115 (serine 115) is a Phosphoserine. One can recognise a Thyroglobulin type-1 domain in the interval 188-262 (QGPCRRHMEA…MEYVDGDFQC (75 aa)). Intrachain disulfides connect cysteine 191/cysteine 218, cysteine 229/cysteine 240, and cysteine 242/cysteine 262.

In terms of assembly, interacts with IGF1; this interaction enhances the growth stimulatory effects of IGF1 on fibroblasts. Interacts with CAV1; this interaction allows trafficking of IGFBP5 from the plasma membrane to the nucleus. Interacts with NCL; this interaction is necessary for IGFBP5 localization to the nucleus. In terms of tissue distribution, mostly in kidney.

The protein localises to the secreted. Its subcellular location is the cytoplasm. It localises to the nucleus. Its function is as follows. Multifunctional protein that plays a critical role in regulating the availability of IGFs to their receptors and thereby regulates IGF-mediated cellular processes including proliferation, differentiation, and apoptosis in a cell-type specific manner. Increases the cell proliferation of osteoblasts, intestinal smooth muscle cells and neuroblastoma cells. Enhances adhesion and survival of epithelial cells but decreases adhesion of mesenchymal cells. Once secreted, acts as a major mediator of mTORC1-dependent feedback inhibition of IGF1 signaling. Also plays a role in the induction of extracellular matrix (ECM) production and deposition independently of its nuclear translocation and binding to IGFs. Acts itself as a growth factor that can act independently of IGFs to regulate bone formation. Acts as a ligand for the ROR1 receptor which triggers formation of ROR1/HER2 heterodimer to enhance CREB oncogenic signaling. This Rattus norvegicus (Rat) protein is Insulin-like growth factor-binding protein 5 (Igfbp5).